The chain runs to 313 residues: 2,3-dihydroxyphenylpropionate/2,3-dihydroxicinnamic acid 1,2-dioxygenase (313 aa).

His115 (proton donor) is an active-site residue. Catalysis depends on His179, which acts as the Proton acceptor.

It belongs to the LigB/MhpB extradiol dioxygenase family. In terms of assembly, homotetramer. Fe(2+) serves as cofactor.

The catalysed reaction is 3-(2,3-dihydroxyphenyl)propanoate + O2 = (2Z,4E)-2-hydroxy-6-oxonona-2,4-dienedioate + H(+). The enzyme catalyses (2E)-3-(2,3-dihydroxyphenyl)prop-2-enoate + O2 = (2Z,4E,7E)-2-hydroxy-6-oxonona-2,4,7-trienedioate + H(+). It functions in the pathway aromatic compound metabolism; 3-phenylpropanoate degradation. Its function is as follows. Catalyzes the non-heme iron(II)-dependent oxidative cleavage of 2,3-dihydroxyphenylpropionic acid and 2,3-dihydroxicinnamic acid into 2-hydroxy-6-ketononadienedioate and 2-hydroxy-6-ketononatrienedioate, respectively. The protein is 2,3-dihydroxyphenylpropionate/2,3-dihydroxicinnamic acid 1,2-dioxygenase of Mycolicibacterium smegmatis (strain ATCC 700084 / mc(2)155) (Mycobacterium smegmatis).